The chain runs to 342 residues: MRLSIVTTMYMSEPYVLEFYRRARAAADKITPDVEIIFVDDGSPDAALQQAVSLLDSDPCVRVIQLSRNFGHHKAMMTGLAHATGDLVFLIDSDLEEDPALLEPFYEKLISTGADVVFGCHARRPGGWLRNFGPKIHYRASALLCDPPLHENTLTVRLMTADYVRSLVQHQERELSIAGLWQITGFYQVPMSVNKAWKGTTTYTFRRKVATLVDNVTSFSNKPLVFIFYLGAAIFIISSSAAGYLIIDRIFFRALQAGWASVIVSIWMLGGVTIFCIGLVGIYVSKVFIETKQRPYTIIRRIYGSDLTTREPSSLKTAFPAAHLSNGKRVTSEPEGLATGNR.

A run of 2 helical transmembrane segments spans residues 227-247 and 262-282; these read IFYL…YLII and VIVS…LVGI.

This sequence belongs to the glycosyltransferase 2 family.

The protein resides in the cell membrane. May play only a redundant role in maintaining cell wall viability and bacterial virulence. This Mycobacterium tuberculosis (strain CDC 1551 / Oshkosh) protein is Putative glycosyltransferases (pimF).